The chain runs to 525 residues: GMP synthase [glutamine-hydrolyzing] (525 aa).

The Glutamine amidotransferase type-1 domain occupies 9-207 (RILILDFGSQ…VRDICQCEAL (199 aa)). Residue C86 is the Nucleophile of the active site. Catalysis depends on residues H181 and E183. Residues 208-400 (WTPAKIIDDA…LGLPYDMLYR (193 aa)) form the GMPS ATP-PPase domain. Residue 235-241 (SGGVDSS) participates in ATP binding.

As to quaternary structure, homodimer.

The catalysed reaction is XMP + L-glutamine + ATP + H2O = GMP + L-glutamate + AMP + diphosphate + 2 H(+). Its pathway is purine metabolism; GMP biosynthesis; GMP from XMP (L-Gln route): step 1/1. Its function is as follows. Catalyzes the synthesis of GMP from XMP. This Salmonella arizonae (strain ATCC BAA-731 / CDC346-86 / RSK2980) protein is GMP synthase [glutamine-hydrolyzing].